The chain runs to 498 residues: Transcription factor bHLH78 (498 aa).

Disordered stretches follow at residues 1–24 and 207–297; these read MDNE…FEHQ and LVSP…PPKD. Over residues 233 to 246 the composition is skewed to polar residues; that stretch reads NPISTASPSPSFSK. A compositionally biased stretch (basic and acidic residues) spans 259–270; that stretch reads SSEEKGGKRRRE. A compositionally biased stretch (acidic residues) spans 271-281; the sequence is EEDDEEEEGEG. Residues 307 to 357 enclose the bHLH domain; the sequence is QATDSHSLAERVRREKIGERMKLLQDLVPGCNKVTGKALMLDEIINYVQSL.

Homodimer. Binds reversibly to CRY2 after blue light illumination. In terms of tissue distribution, expressed constitutively in roots, leaves, stems, and flowers.

It localises to the nucleus. Its function is as follows. Transcription factor that binds DNA to G box 5'-CACGTG-3' and to E-box 5'-CANNTG-3'. Binds to chromatin DNA of the FT gene and promotes its expression, and thus triggers flowering in response to blue light. The chain is Transcription factor bHLH78 (BHLH78) from Arabidopsis thaliana (Mouse-ear cress).